The chain runs to 114 residues: MVSLWVEGTFPPPGFGLAHVACSGHGMKQKRKPASSEPTPEDALGGSAVPVRFHLHPEGLLWCSRCFFSHGPKGSEPPGRSAGLQGATERSGRPSVQAQAQACENLVPATVWDG.

Disordered stretches follow at residues 26–45 (GMKQ…DALG) and 72–98 (PKGS…SVQA).

This is an uncharacterized protein from Homo sapiens (Human).